The sequence spans 88 residues: Small ribosomal subunit protein uS15 (88 aa).

Residues 1-23 (MIASSVKAEVVKSNARSANDTGS) are disordered. Over residues 14–23 (NARSANDTGS) the composition is skewed to polar residues.

The protein belongs to the universal ribosomal protein uS15 family. Part of the 30S ribosomal subunit. Forms a bridge to the 50S subunit in the 70S ribosome, contacting the 23S rRNA.

In terms of biological role, one of the primary rRNA binding proteins, it binds directly to 16S rRNA where it helps nucleate assembly of the platform of the 30S subunit by binding and bridging several RNA helices of the 16S rRNA. Its function is as follows. Forms an intersubunit bridge (bridge B4) with the 23S rRNA of the 50S subunit in the ribosome. In Delftia acidovorans (strain DSM 14801 / SPH-1), this protein is Small ribosomal subunit protein uS15.